We begin with the raw amino-acid sequence, 199 residues long: Probable nicotinate-nucleotide adenylyltransferase (199 aa).

It belongs to the NadD family.

It carries out the reaction nicotinate beta-D-ribonucleotide + ATP + H(+) = deamido-NAD(+) + diphosphate. The protein operates within cofactor biosynthesis; NAD(+) biosynthesis; deamido-NAD(+) from nicotinate D-ribonucleotide: step 1/1. Catalyzes the reversible adenylation of nicotinate mononucleotide (NaMN) to nicotinic acid adenine dinucleotide (NaAD). This is Probable nicotinate-nucleotide adenylyltransferase from Corynebacterium jeikeium (strain K411).